The following is a 171-amino-acid chain: Squamosa promoter-binding protein 2 (171 aa).

2 disordered regions span residues 20 to 46 and 57 to 76; these read GDEG…VVKV and KLNL…TASG. Residues 22 to 40 are compositionally biased toward acidic residues; that stretch reads EGSDFEEEEEGEDEEEEEQ. The SBP-type zinc finger occupies 82–159; that stretch reads QPCCLVENCG…AGHNERRRKS (78 aa). Cys-85, Cys-90, Cys-107, His-110, Cys-126, Cys-129, His-133, and Cys-145 together coordinate Zn(2+). The Bipartite nuclear localization signal signature appears at 142–158; it reads KRSCRRRLAGHNERRRK. Residues 149 to 158 are compositionally biased toward basic residues; sequence LAGHNERRRK. Residues 149–171 are disordered; it reads LAGHNERRRKSSLESHKEGRSPR. A compositionally biased stretch (basic and acidic residues) spans 159–171; that stretch reads SSLESHKEGRSPR.

It is found in the nucleus. Functionally, probable transcriptional factor. Binds to the promoter of the SQUAMOSA gene. The protein is Squamosa promoter-binding protein 2 (SBP2) of Antirrhinum majus (Garden snapdragon).